Here is a 164-residue protein sequence, read N- to C-terminus: Ribosome-binding factor A (164 aa).

The protein belongs to the RbfA family. In terms of assembly, monomer. Binds 30S ribosomal subunits, but not 50S ribosomal subunits or 70S ribosomes.

It localises to the cytoplasm. Its function is as follows. One of several proteins that assist in the late maturation steps of the functional core of the 30S ribosomal subunit. Associates with free 30S ribosomal subunits (but not with 30S subunits that are part of 70S ribosomes or polysomes). Required for efficient processing of 16S rRNA. May interact with the 5'-terminal helix region of 16S rRNA. The sequence is that of Ribosome-binding factor A from Caulobacter sp. (strain K31).